A 1706-amino-acid polypeptide reads, in one-letter code: Brefeldin A-inhibited guanine nucleotide-exchange protein 4 (1706 aa).

The region spanning 555–742 (MLEQRRAYKI…GSLYDRVVKE (188 aa)) is the SEC7 domain. The active site involves glutamate 657.

As to quaternary structure, homodimer.

It localises to the cytoplasm. Its subcellular location is the cytosol. The protein resides in the membrane. Inhibited by brefeldin A. Its function is as follows. Activates the ARF proteins by exchanging bound GDP for free GTP. Plays a role in vesicular protein sorting. The polypeptide is Brefeldin A-inhibited guanine nucleotide-exchange protein 4 (BIG4) (Arabidopsis thaliana (Mouse-ear cress)).